The following is an 83-amino-acid chain: Small ribosomal subunit protein eS21 (83 aa).

Belongs to the eukaryotic ribosomal protein eS21 family. In terms of assembly, component of the 40S small ribosomal subunit. Interacts with sta.

Its subcellular location is the cytoplasm. It localises to the cytosol. It is found in the rough endoplasmic reticulum. Its function is as follows. May be an associated component of the ribosome rather than a core structural subunit. May act as a translation initiation factor. Has a role in regulation of cell proliferation in the hematopoietic organs and the imaginal disks of larva. In Drosophila ananassae (Fruit fly), this protein is Small ribosomal subunit protein eS21 (RpS21).